A 154-amino-acid polypeptide reads, in one-letter code: 3-dehydroquinate dehydratase (154 aa).

The Proton acceptor role is filled by tyrosine 26. Substrate is bound by residues asparagine 77, histidine 83, and aspartate 90. Histidine 103 functions as the Proton donor in the catalytic mechanism. Substrate-binding positions include 104–105 (IS) and arginine 114.

This sequence belongs to the type-II 3-dehydroquinase family. As to quaternary structure, homododecamer.

The enzyme catalyses 3-dehydroquinate = 3-dehydroshikimate + H2O. It functions in the pathway metabolic intermediate biosynthesis; chorismate biosynthesis; chorismate from D-erythrose 4-phosphate and phosphoenolpyruvate: step 3/7. Functionally, catalyzes a trans-dehydration via an enolate intermediate. The chain is 3-dehydroquinate dehydratase from Buchnera aphidicola subsp. Baizongia pistaciae (strain Bp).